Consider the following 302-residue polypeptide: MADQLIRATAADGGIRAVGVITTNLTEEARQRHRLSYVATAALGRTMAAGLLLASSMKQEKSRVNIRIRGNGPLGGLLVDAGLDGTVRGYVQNPSVELAPNAQGKLDVGGAVGQDGFLYVVRDVGFGYPYSSTVELVSGEIGEDVTHYLVTSEQTPSALLLGVFVGKDGVTAAGGLLLQVMPKAARDEALVAALESRLGHLTGFTPLLRSGKSLKDIFQELLGDFGLAILPEVQLLRFDCRCSFPRVLGALKILGQDELEDMIEKDNGAEATCDFCGEVYQADRHHLAQLIGEIQREKAEKL.

Cystine bridges form between Cys-240-Cys-242 and Cys-273-Cys-276.

It belongs to the HSP33 family. In terms of processing, under oxidizing conditions two disulfide bonds are formed involving the reactive cysteines. Under reducing conditions zinc is bound to the reactive cysteines and the protein is inactive.

The protein resides in the cytoplasm. Functionally, redox regulated molecular chaperone. Protects both thermally unfolding and oxidatively damaged proteins from irreversible aggregation. Plays an important role in the bacterial defense system toward oxidative stress. This chain is 33 kDa chaperonin, found in Synechocystis sp. (strain ATCC 27184 / PCC 6803 / Kazusa).